Reading from the N-terminus, the 266-residue chain is Adaptin ear-binding coat-associated protein 2 (266 aa).

Disordered regions lie at residues 165 to 198 and 245 to 266; these read MRKKEGAAGTPRARPTSAGGLSLLPPPPGGKSST and DFTKSTGSPSSQSQPGTGWVQF. S181 is subject to Phosphoserine. 2 short sequence motifs (WXXF motif) span residues 243–246 and 263–266; these read WGDF and WVQF. Positions 249–266 are enriched in low complexity; the sequence is STGSPSSQSQPGTGWVQF.

The protein belongs to the NECAP family. Interacts with AP1G1 and AP2A1 components of the adapter protein complexes AP-1 and AP-2. Interacts with the GAE domain proteins GGA1, GGA2 and GGA3. Expressed in brain, heart, kidney, liver, lung, skeletal muscles and testis (at protein level).

The protein resides in the cytoplasmic vesicle. It is found in the clathrin-coated vesicle membrane. Its subcellular location is the cell membrane. Its function is as follows. Involved in endocytosis. The sequence is that of Adaptin ear-binding coat-associated protein 2 (Necap2) from Mus musculus (Mouse).